The sequence spans 2281 residues: Retinal-specific phospholipid-transporting ATPase ABCA4 (2281 aa).

Residues methionine 1–arginine 24 lie on the Cytoplasmic side of the membrane. A helical transmembrane segment spans residues phenylalanine 25–valine 45. Residues asparagine 46–serine 646 are Extracellular-facing. 2 cysteine pairs are disulfide-bonded: cysteine 54-cysteine 81 and cysteine 75-cysteine 324. Asparagine 98 carries an N-linked (GlcNAc...) asparagine glycan. The Mg(2+) site is built by serine 336 and asparagine 338. Cysteine 370 and cysteine 519 are joined by a disulfide. N-linked (Hex...) asparagine glycosylation is found at asparagine 415 and asparagine 504. Positions 587 and 653 each coordinate an N-all-trans-retinylidenephosphatidylethanolamine. 3 disulfides stabilise this stretch: cysteine 641/cysteine 1488, cysteine 1442/cysteine 1453, and cysteine 1486/cysteine 1500. A helical transmembrane segment spans residues phenylalanine 647 to valine 667. At serine 668–threonine 699 the chain is on the cytoplasmic side. The helical transmembrane segment at tryptophan 700–methionine 720 threads the bilayer. Residues histidine 721 to proline 730 are Extracellular-facing. The helical transmembrane segment at phenylalanine 731 to leucine 751 threads the bilayer. Residues serine 752–serine 759 are Cytoplasmic-facing. The helical transmembrane segment at leucine 760–phenylalanine 780 threads the bilayer. Over alanine 781–serine 835 the chain is Extracellular. The chain crosses the membrane as a helical span at residues phenylalanine 836–tyrosine 856. Residues leucine 857–glutamine 1374 are Cytoplasmic-facing. At threonine 901 the chain carries Phosphothreonine. In terms of domain architecture, ABC transporter 1 spans valine 929–valine 1160. Residues phenylalanine 938, glycine 966, and lysine 969 each coordinate ATP. Threonine 970 lines the Mg(2+) pocket. ATP contacts are provided by threonine 971, glutamine 1010, lysine 1054, glycine 1064, glycine 1065, and histidine 1118. Serine 1185 is subject to Phosphoserine. The interval glutamate 1295–serine 1340 is disordered. The span at alanine 1310–serine 1319 shows a compositional bias: polar residues. Position 1313 is a phosphothreonine (threonine 1313). 2 positions are modified to phosphoserine: serine 1317 and serine 1319. A helical transmembrane segment spans residues isoleucine 1375 to phenylalanine 1395. Over glycine 1396–valine 1679 the chain is Extracellular. N-linked (Hex...) asparagine glycosylation is present at asparagine 1455. Residue asparagine 1527 is glycosylated (N-linked (Hex...) asparagine). N-linked (GlcNAc...) asparagine glycosylation is present at asparagine 1586. Asparagine 1660 carries N-linked (Hex...) asparagine glycosylation. A helical transmembrane segment spans residues valine 1680–isoleucine 1700. At glutamine 1701–asparagine 1725 the chain is on the cytoplasmic side. A helical transmembrane segment spans residues phenylalanine 1726–glycine 1746. Topologically, residues phenylalanine 1747–asparagine 1757 are extracellular. Residues leucine 1758–proline 1778 form a helical membrane-spanning segment. Residues alanine 1779–tyrosine 1790 are Cytoplasmic-facing. Residues valine 1791–leucine 1811 traverse the membrane as a helical segment. Residues glutamate 1812 to lysine 1829 lie on the Extracellular side of the membrane. An N-linked (GlcNAc...) asparagine glycan is attached at asparagine 1817. The helical transmembrane segment at leucine 1830–glutamine 1850 threads the bilayer. Residues alanine 1851–alanine 1879 are Cytoplasmic-facing. The helical transmembrane segment at methionine 1880–phenylalanine 1900 threads the bilayer. Residues serine 1901 to glycine 2281 lie on the Extracellular side of the membrane. Asparagine 1931 is a glycosylation site (N-linked (GlcNAc...) asparagine). One can recognise an ABC transporter 2 domain in the interval leucine 1936 to lysine 2168. Residues asparagine 1972, glycine 1973, lysine 1976, threonine 1977, and threonine 1978 each coordinate ATP. Threonine 1977 provides a ligand contact to Mg(2+). Residues asparagine 2004 and asparagine 2050 are each glycosylated (N-linked (GlcNAc...) asparagine). ATP is bound at residue glycine 2071. Residues valine 2242–alanine 2247 are essential for ATP binding and ATPase activity. Asparagine 2251 carries N-linked (GlcNAc...) asparagine glycosylation. The disordered stretch occupies residues alanine 2262–glycine 2281.

Post-translationally, N-glycosylated. In terms of processing, proteolytic cleavage by trypsin leads to a 120-kDa N-terminal fragment and a 115-kDa C-terminal fragment that are linked through disulfide bonds. Phosphorylation is independent of light exposure and modulates ATPase activity. As to expression, expressed in retina namely in the periphery and incisures of the rod outer segments (ROS).

The protein localises to the membrane. Its subcellular location is the cell projection. It is found in the cilium. The protein resides in the photoreceptor outer segment. It localises to the cytoplasmic vesicle. The protein localises to the endoplasmic reticulum. It carries out the reaction ATP + H2O + phospholipidSide 1 = ADP + phosphate + phospholipidSide 2.. The enzyme catalyses an N-all-trans-retinylidenephosphatidylethanolamine(out) + ATP + H2O = an N-all-trans-retinylidenephosphatidylethanolamine(in) + ADP + phosphate + H(+). It catalyses the reaction a 1,2-diacyl-sn-glycero-3-phosphoethanolamine(out) + ATP + H2O = a 1,2-diacyl-sn-glycero-3-phosphoethanolamine(in) + ADP + phosphate + H(+). The catalysed reaction is N-11-cis-retinylidenephosphatidylethanolamine(out) + ATP + H2O = N-11-cis-retinylidenephosphatidylethanolamine(in) + ADP + phosphate + H(+). It carries out the reaction ATP + H2O = ADP + phosphate + H(+). All-trans-retinal transport activity is reduced by EDTA chelation of Mg2+. All-trans-retinal transport activity is inhibited by N-ethylmaleimide (NEM). Phosphatidylethanolamine transport is strongly inhibited by beryllium fluoride and NEM. Functionally, flippase that catalyzes in an ATP-dependent manner the transport of retinal-phosphatidylethanolamine conjugates like the 11-cis and all-trans isomers of N-retinylidene-phosphatidylethanolamine from the lumen to the cytoplasmic leaflet of photoreceptor outer segment disk membranes, where N-cis-retinylidene-phosphatidylethanolamine (N-cis-R-PE) is then isomerized to its all-trans isomer (N-trans-R-PE) and reduced by RDH8 to produce all-trans-retinol (all-trans-rol) and therefore prevents the accumulation of excess of 11-cis-retinal and its schiff-base conjugate and the formation of toxic bisretinoid. Displays both ATPase and GTPase activity that is strongly influenced by the lipid environment and the presence of retinoid compounds. Binds the unprotonated form of N-retinylidene-phosphatidylethanolamine with high affinity in the absence of ATP and ATP binding and hydrolysis induce a protein conformational change that causes the dissociation of N-retinylidene-phosphatidylethanolamine. The protein is Retinal-specific phospholipid-transporting ATPase ABCA4 of Bos taurus (Bovine).